The sequence spans 115 residues: Con-Ins G1b (115 aa).

An N-terminal signal peptide occupies residues 1 to 24 (MTTSFYFLLMALGLLLYVCQSSFG). A propeptide spanning residues 25 to 29 (NQHTR) is cleaved from the precursor. P34 is modified (4-hydroxyproline; partial). 3 disulfides stabilise this stretch: C38-C101, C50-C114, and C100-C105. A 4-carboxyglutamate modification is found at E41. The propeptide at 52 to 94 (RKRNDAGEKRGRASPLWQRRGFLSKLKARAKRNGAFHLPRDGR) is c peptide. E98 carries the post-translational modification 4-carboxyglutamate. P104 is subject to 4-hydroxyproline; partial. E109 bears the 4-carboxyglutamate; partial mark. Position 114 is a cysteine amide (C114).

It belongs to the insulin family. As to quaternary structure, heterodimer of A and B chains; disulfide-linked. Expressed by the venom gland.

It localises to the secreted. Functionally, this venom insulin, from a fish-hunting cone snail, facilitates prey capture by rapidly inducing hypoglycemic shock. It is one of the smallest known insulin found in nature and lacks the C-terminal segment of the B chain that, in human insulin, mediates engagement of the insulin receptor (INSR) and assembly of the hormone's hexameric storage form. Despite lacking this segment, it both binds and activates human insulin receptor (long isoform (HIR-B) of INSR) with only a 10-fold lower potency. In vivo, intraperitoneal injection of this peptide into zebrafish lowers blood glucose with the same potency than human insulin. In addition, when applied to water, this peptide reduces overall locomotor activity of zebrafish larvae, observed as a significant decrease in the percentage of time spent swimming and movement frequency. The protein is Con-Ins G1b of Conus geographus (Geography cone).